Reading from the N-terminus, the 528-residue chain is Protein BFR2 (528 aa).

Disordered stretches follow at residues asparagine 14–lysine 158 and aspartate 372–isoleucine 401. The span at aspartate 132–glutamate 146 shows a compositional bias: acidic residues.

This sequence belongs to the AATF family.

It is found in the nucleus. It localises to the nucleolus. The polypeptide is Protein BFR2 (BFR2) (Eremothecium gossypii (strain ATCC 10895 / CBS 109.51 / FGSC 9923 / NRRL Y-1056) (Yeast)).